Reading from the N-terminus, the 165-residue chain is Putative BTB/POZ domain-containing protein At2g40440 (165 aa).

The region spanning V24–A98 is the BTB domain.

Its pathway is protein modification; protein ubiquitination. Functionally, may act as a substrate-specific adapter of an E3 ubiquitin-protein ligase complex (CUL3-RBX1-BTB) which mediates the ubiquitination and subsequent proteasomal degradation of target proteins. This Arabidopsis thaliana (Mouse-ear cress) protein is Putative BTB/POZ domain-containing protein At2g40440.